We begin with the raw amino-acid sequence, 248 residues long: MTEANRILLGVNVDHVATLRQARGTRYPDPVKAALDAEEAGADGITVHLREDRRHIQERDVLMMKDALQTRMNFEMGVTEAMLAFAEQLRPEHVCLVPETRQELTTEGGLDVAGQEARIREAVERLRGCGAEVSLFIDADPRQIEAAARVGAPAIELHTGRYADAHSVAERACELARIRDGVEVGLSHGLIVNAGHGLHYHNAEAIAAIRGVNELNIGHAIVAHALFVGFKQAVKEMKHLILSAAARG.

Asn12 contributes to the 3-amino-2-oxopropyl phosphate binding site. Position 14 to 15 (14 to 15) interacts with 1-deoxy-D-xylulose 5-phosphate; it reads DH. Arg23 lines the 3-amino-2-oxopropyl phosphate pocket. His48 functions as the Proton acceptor in the catalytic mechanism. 2 residues coordinate 1-deoxy-D-xylulose 5-phosphate: Arg50 and His55. Glu75 serves as the catalytic Proton acceptor. A 1-deoxy-D-xylulose 5-phosphate-binding site is contributed by Thr105. Residue His196 is the Proton donor of the active site. Residues Gly197 and 218 to 219 contribute to the 3-amino-2-oxopropyl phosphate site; that span reads GH.

Belongs to the PNP synthase family. Homooctamer; tetramer of dimers.

Its subcellular location is the cytoplasm. The catalysed reaction is 3-amino-2-oxopropyl phosphate + 1-deoxy-D-xylulose 5-phosphate = pyridoxine 5'-phosphate + phosphate + 2 H2O + H(+). It functions in the pathway cofactor biosynthesis; pyridoxine 5'-phosphate biosynthesis; pyridoxine 5'-phosphate from D-erythrose 4-phosphate: step 5/5. Catalyzes the complicated ring closure reaction between the two acyclic compounds 1-deoxy-D-xylulose-5-phosphate (DXP) and 3-amino-2-oxopropyl phosphate (1-amino-acetone-3-phosphate or AAP) to form pyridoxine 5'-phosphate (PNP) and inorganic phosphate. In Stutzerimonas stutzeri (strain A1501) (Pseudomonas stutzeri), this protein is Pyridoxine 5'-phosphate synthase.